A 409-amino-acid chain; its full sequence is NADH-ubiquinone oxidoreductase chain 4 (409 aa).

Transmembrane regions (helical) follow at residues L10–F30, S44–S64, I76–F96, E98–I118, S120–F140, F160–L180, L194–L214, V221–S241, A245–I265, I271–I291, F305–L325, M353–T373, and V389–Y409.

Belongs to the complex I subunit 4 family.

The protein resides in the mitochondrion membrane. It catalyses the reaction a ubiquinone + NADH + 5 H(+)(in) = a ubiquinol + NAD(+) + 4 H(+)(out). Its function is as follows. Core subunit of the mitochondrial membrane respiratory chain NADH dehydrogenase (Complex I) that is believed to belong to the minimal assembly required for catalysis. Complex I functions in the transfer of electrons from NADH to the respiratory chain. The immediate electron acceptor for the enzyme is believed to be ubiquinone. The polypeptide is NADH-ubiquinone oxidoreductase chain 4 (Caenorhabditis elegans).